Consider the following 233-residue polypeptide: Purine nucleoside phosphorylase DeoD-type (233 aa).

His-4 is an a purine D-ribonucleoside binding site. Phosphate-binding positions include Gly-20, Arg-24, Arg-43, and 87–90 (RIGT). A purine D-ribonucleoside contacts are provided by residues 179–181 (EME) and 203–204 (SD). The active-site Proton donor is the Asp-204.

The protein belongs to the PNP/UDP phosphorylase family. As to quaternary structure, homohexamer; trimer of homodimers.

The catalysed reaction is a purine D-ribonucleoside + phosphate = a purine nucleobase + alpha-D-ribose 1-phosphate. The enzyme catalyses a purine 2'-deoxy-D-ribonucleoside + phosphate = a purine nucleobase + 2-deoxy-alpha-D-ribose 1-phosphate. Its function is as follows. Catalyzes the reversible phosphorolytic breakdown of the N-glycosidic bond in the beta-(deoxy)ribonucleoside molecules, with the formation of the corresponding free purine bases and pentose-1-phosphate. This chain is Purine nucleoside phosphorylase DeoD-type, found in Helicobacter pylori (strain HPAG1).